Reading from the N-terminus, the 443-residue chain is Aspartate--tRNA(Asp/Asn) ligase (443 aa).

E175 contacts L-aspartate. Residues 197-200 (QLFK) form an aspartate region. R219 serves as a coordination point for L-aspartate. ATP contacts are provided by residues 219–221 (RAE), 227–229 (RHL), and E366. Residues E366 and S369 each coordinate Mg(2+). Residues S369 and R373 each coordinate L-aspartate. 414–417 (GCER) lines the ATP pocket.

It belongs to the class-II aminoacyl-tRNA synthetase family. Type 2 subfamily. As to quaternary structure, homodimer. Mg(2+) serves as cofactor.

The protein localises to the cytoplasm. It catalyses the reaction tRNA(Asx) + L-aspartate + ATP = L-aspartyl-tRNA(Asx) + AMP + diphosphate. Functionally, aspartyl-tRNA synthetase with relaxed tRNA specificity since it is able to aspartylate not only its cognate tRNA(Asp) but also tRNA(Asn). Reaction proceeds in two steps: L-aspartate is first activated by ATP to form Asp-AMP and then transferred to the acceptor end of tRNA(Asp/Asn). The protein is Aspartate--tRNA(Asp/Asn) ligase of Methanococcoides burtonii (strain DSM 6242 / NBRC 107633 / OCM 468 / ACE-M).